Consider the following 1150-residue polypeptide: PAN2-PAN3 deadenylation complex catalytic subunit pan2 (1150 aa).

WD repeat units lie at residues 96–139 (AHEE…DKLH) and 270–309 (ANVSFMLGIDLSPSGEALAINDAECAIHLWGSPAKVHFNE). A linker region spans residues 310-446 (MSKEAEFGDV…GAKINGETDD (137 aa)). Residues 447–816 (DPLLKYSNVE…IPCVLAYQVQ (370 aa)) enclose the USP domain. Positions 865–1043 (VALDTEFVDL…IEDARMALRL (179 aa)) constitute an Exonuclease domain. 4 residues coordinate a divalent metal cation: Asp-868, Glu-870, Asp-977, and Asp-1036. A disordered region spans residues 1074-1150 (PPPRNGVPTV…GDFFSGSPLK (77 aa)). Over residues 1091–1106 (VTMQNNSGRNTPSTSD) the composition is skewed to polar residues. Low complexity predominate over residues 1108 to 1120 (AGAAASAPATPRQ).

It belongs to the peptidase C19 family. PAN2 subfamily. In terms of assembly, forms a heterotrimer with an asymmetric homodimer of the regulatory subunit pan3 to form the poly(A)-nuclease (PAN) deadenylation complex. Requires a divalent metal cation as cofactor.

It is found in the cytoplasm. It catalyses the reaction Exonucleolytic cleavage of poly(A) to 5'-AMP.. Its activity is regulated as follows. Positively regulated by the regulatory subunit pan3. Catalytic subunit of the poly(A)-nuclease (PAN) deadenylation complex, one of two cytoplasmic mRNA deadenylases involved in mRNA turnover. PAN specifically shortens poly(A) tails of RNA and the activity is stimulated by poly(A)-binding protein pab1. PAN deadenylation is followed by rapid degradation of the shortened mRNA tails by the CCR4-NOT complex. Deadenylated mRNAs are then degraded by two alternative mechanisms, namely exosome-mediated 3'-5' exonucleolytic degradation, or deadenylation-dependent mRNA decaping and subsequent 5'-3' exonucleolytic degradation by xrn1. May also be involved in post-transcriptional maturation of mRNA poly(A) tails. The chain is PAN2-PAN3 deadenylation complex catalytic subunit pan2 from Aspergillus niger (strain ATCC MYA-4892 / CBS 513.88 / FGSC A1513).